Reading from the N-terminus, the 322-residue chain is Coelomocyte uptake defective protein 15 (322 aa).

The N-terminal stretch at 1-20 is a signal peptide; it reads MVNSLSRILFCSLLIFSVIS. N62, N98, N144, N170, N180, N183, and N222 each carry an N-linked (GlcNAc...) asparagine glycan. A helical transmembrane segment spans residues 244–264; the sequence is LFGIMITFGTLLLLTALFYAA.

Belongs to the OSTM1 family.

The protein resides in the membrane. In terms of biological role, modulates the transport of substances from the endosomal to lysosomal compartments. Plays a role in lysosome formation and function in coelomocytes. In Caenorhabditis elegans, this protein is Coelomocyte uptake defective protein 15.